The sequence spans 235 residues: Thaumatin II (235 aa).

An N-terminal signal peptide occupies residues 1-22 (MAATTCFFFLFPFLLLLTLSRA). 8 disulfide bridges follow: C31–C226, C78–C88, C93–C99, C143–C215, C148–C199, C156–C167, C171–C180, and C181–C186. The propeptide at 230–235 (LELEDE) is removed in mature form.

Belongs to the thaumatin family.

The protein resides in the cytoplasmic vesicle. Functionally, taste-modifying protein; intensely sweet-tasting. It is 100000 times sweeter than sucrose on a molar basis. The sequence is that of Thaumatin II from Thaumatococcus daniellii (Katemfe).